Consider the following 185-residue polypeptide: Ribosome-recycling factor (185 aa).

The protein belongs to the RRF family.

It is found in the cytoplasm. Its function is as follows. Responsible for the release of ribosomes from messenger RNA at the termination of protein biosynthesis. May increase the efficiency of translation by recycling ribosomes from one round of translation to another. The polypeptide is Ribosome-recycling factor (Helicobacter hepaticus (strain ATCC 51449 / 3B1)).